A 357-amino-acid polypeptide reads, in one-letter code: MAQHRVVLLPGDGIGPEITAVARQLLEAVSQRHGFELCFDGQLIGGSAIDACGEPLPASTLDACKAADAVLLAAIGSPRFDNLPRDKRPETGLLGLRSGMALFANLRPVKIVPALIGASSLRPEVIEGVDLMVVRELTGGIYFGQPKGRIQADGEERGFNTMTYSSSEVDRIARVAFDLARERRGNLCSVDKANVLDVSQLWRDRVDAMAPAYSDVEVSHMYVDNAAMQLVRSPRQFDVLLTGNLFGDILSDEAAMLTGSIGMLPSASLGSDCPGLFEPVHGSAPDIAGQDKANPMAMVLSAAMMLRIGLKQTEAAADLEAAVDKVLAAGFRTGDLMAEGCTALGCRAMGDALLKAL.

Residues R97, R107, R135, and D224 each coordinate substrate. Mg(2+) contacts are provided by D224, D248, and D252. 282–294 lines the NAD(+) pocket; the sequence is GSAPDIAGQDKAN.

Belongs to the isocitrate and isopropylmalate dehydrogenases family. LeuB type 1 subfamily. As to quaternary structure, homodimer. The cofactor is Mg(2+). Mn(2+) serves as cofactor.

It is found in the cytoplasm. It carries out the reaction (2R,3S)-3-isopropylmalate + NAD(+) = 4-methyl-2-oxopentanoate + CO2 + NADH. It participates in amino-acid biosynthesis; L-leucine biosynthesis; L-leucine from 3-methyl-2-oxobutanoate: step 3/4. Catalyzes the oxidation of 3-carboxy-2-hydroxy-4-methylpentanoate (3-isopropylmalate) to 3-carboxy-4-methyl-2-oxopentanoate. The product decarboxylates to 4-methyl-2 oxopentanoate. This is 3-isopropylmalate dehydrogenase from Parasynechococcus marenigrum (strain WH8102).